Reading from the N-terminus, the 155-residue chain is Large ribosomal subunit protein uL15 (155 aa).

The span at 1 to 13 shows a compositional bias: basic and acidic residues; it reads MKLNELRDCEGAT. Residues 1 to 47 are disordered; sequence MKLNELRDCEGATKNRKRIGRGIGSGTGKTGGRGVKGQKSRSGVSLN. Gly residues predominate over residues 21-35; sequence RGIGSGTGKTGGRGV.

Belongs to the universal ribosomal protein uL15 family. In terms of assembly, part of the 50S ribosomal subunit.

In terms of biological role, binds to the 23S rRNA. This is Large ribosomal subunit protein uL15 from Bartonella tribocorum (strain CIP 105476 / IBS 506).